A 100-amino-acid chain; its full sequence is Small ribosomal subunit protein uS14c (100 aa).

The protein belongs to the universal ribosomal protein uS14 family. In terms of assembly, part of the 30S ribosomal subunit.

The protein localises to the plastid. In terms of biological role, binds 16S rRNA, required for the assembly of 30S particles. The chain is Small ribosomal subunit protein uS14c from Euglena longa (Euglenophycean alga).